Here is a 359-residue protein sequence, read N- to C-terminus: UPF0284 protein MAE_56900 (359 aa).

The protein belongs to the UPF0284 family.

This is UPF0284 protein MAE_56900 from Microcystis aeruginosa (strain NIES-843 / IAM M-2473).